A 474-amino-acid chain; its full sequence is Crocetin glucosyltransferase, chloroplastic (474 aa).

A chloroplast-targeting transit peptide spans 1-45; it reads MVQQRHVLLITYPAQGHINPALQFAQRLLRMGIQVTLATSVYALS. The active-site Proton acceptor is His17. His17 lines the an anthocyanidin pocket. UDP-alpha-D-glucose is bound by residues Gln346, His361, Trp364, Asn365, Ser366, Glu369, Asp385, and Gln386.

It belongs to the UDP-glycosyltransferase family. Ubiquitous.

The protein resides in the plastid. The protein localises to the chloroplast. It catalyses the reaction crocetin + UDP-alpha-D-glucose = beta-D-glucosyl crocetin + UDP. The enzyme catalyses beta-D-glucosyl crocetin + UDP-alpha-D-glucose = bis(beta-D-glucosyl) crocetin + UDP. It carries out the reaction beta-D-gentiobiosyl crocetin + UDP-alpha-D-glucose = beta-D-gentiobiosyl beta-D-glucosyl crocetin + UDP. Its function is as follows. Glucosyltransferase acting on a broad range of substrates, including crocetin, 4-coumaric acid, caffeic acid and ferulic acid. No activity with indol-3-acetic acid, bixin and norbixin, and no formation of O-glucosides. Involved with UGT94E5 in sequential glycosylation of crocetin to crocin (bis(beta-D-gentiobiosyl) crocetin). The chain is Crocetin glucosyltransferase, chloroplastic (UGT75L6) from Gardenia jasminoides (Cape jasmine).